Here is a 113-residue protein sequence, read N- to C-terminus: MHEMSIAEGIVQLLEEQAAAQRFERVKAVWLEIGPLAAVEVESLRFCFEAVTRGSLAEGARLEIVELPGRAWCLGCNASVAIRQRYDACPQCGSYRLQVTQGDELRVKELEVE.

Residue His-2 coordinates Ni(2+). Zn(2+) contacts are provided by Cys-73, Cys-76, Cys-89, and Cys-92.

The protein belongs to the HypA/HybF family.

Its function is as follows. Involved in the maturation of [NiFe] hydrogenases. Required for nickel insertion into the metal center of the hydrogenase. This chain is Hydrogenase maturation factor HypA, found in Azotobacter chroococcum mcd 1.